A 151-amino-acid polypeptide reads, in one-letter code: UPF0756 membrane protein HS_0993 (151 aa).

4 helical membrane passes run 1-21 (MSLQFNSIALLLVSLILLGVL), 52-72 (YGVNIGIIILTIGVLSPIVSG), 81-101 (ALIHWKMFLAMAVGVLVAWFG), and 123-143 (ILGVAFLGGVPVGPLIAAGIL).

It belongs to the UPF0756 family.

The protein localises to the cell membrane. This Histophilus somni (strain 129Pt) (Haemophilus somnus) protein is UPF0756 membrane protein HS_0993.